The sequence spans 334 residues: Phosphate acyltransferase (334 aa).

The protein belongs to the PlsX family. As to quaternary structure, homodimer. Probably interacts with PlsY.

Its subcellular location is the cytoplasm. It carries out the reaction a fatty acyl-[ACP] + phosphate = an acyl phosphate + holo-[ACP]. It participates in lipid metabolism; phospholipid metabolism. Functionally, catalyzes the reversible formation of acyl-phosphate (acyl-PO(4)) from acyl-[acyl-carrier-protein] (acyl-ACP). This enzyme utilizes acyl-ACP as fatty acyl donor, but not acyl-CoA. The protein is Phosphate acyltransferase of Halothermothrix orenii (strain H 168 / OCM 544 / DSM 9562).